The primary structure comprises 503 residues: Anhydrotetracycline monooxygenase (503 aa).

It belongs to the PheA/TfdB FAD monooxygenase family. FAD is required as a cofactor.

It catalyses the reaction anhydrotetracycline + NADPH + O2 + H(+) = 5a,11a-dehydrotetracycline + NADP(+) + H2O. It functions in the pathway antibiotic biosynthesis; oxytetracycline biosynthesis. Functionally, catalyzes hydroxylation of the anthracycline structure at position C-6 during the biosynthesis of oxytetracyline. The sequence is that of Anhydrotetracycline monooxygenase from Streptomyces rimosus.